The chain runs to 203 residues: LexA repressor (203 aa).

The segment at residues 30-50 (VREICQAVSLKSTSTVHGHLK) is a DNA-binding region (H-T-H motif). Active-site for autocatalytic cleavage activity residues include Ser127 and Lys164.

Belongs to the peptidase S24 family. In terms of assembly, homodimer.

It catalyses the reaction Hydrolysis of Ala-|-Gly bond in repressor LexA.. Functionally, represses a number of genes involved in the response to DNA damage (SOS response), including recA and lexA. In the presence of single-stranded DNA, RecA interacts with LexA causing an autocatalytic cleavage which disrupts the DNA-binding part of LexA, leading to derepression of the SOS regulon and eventually DNA repair. The polypeptide is LexA repressor (Clostridium perfringens (strain 13 / Type A)).